A 481-amino-acid chain; its full sequence is MRHLWLLLLLCVFSVQTQAADDDYDEPTDSLDARGHRPVDRRKEEPPSLRPAPPPISGGGYRARPAKATANQKKVERRPPDAGGCLHADTDMGVLCPTGCTLQQTLLNQERPIKSSIAELNNNIQSVSDTSSVTFQYLTLLKDMWKKKQAQVKENENVINEYSSILEDQRLYIDETVNDNIPLNLRVLRSILEDLRSKIQKLESDISAQMEYCRTPCTVSCNIPVVSGKECEEIIRKGGETSEMYLIQPDTSIKPYRVYCDMKTENGGWTVIQNRQDGSVDFGRKWDPYKKGFGNIATNEDAKKYCGLPGEYWLGNDKISQLTRMGPTELLIEMEDWKGDKVKAHYGGFTVQNEASKYQVSVNKYKGTAGNALMDGASQLVGENRTMTIHNGMFFSTYDRDNDGWVTTDPRKQCSKEDGGGWWYNRCHAANPNGRYYWGGLYSWDMSKHGTDDGVVWMNWKGSWYSMRRMSMKIRPFFPQQ.

The N-terminal stretch at 1–19 (MRHLWLLLLLCVFSVQTQA) is a signal peptide. The segment at 22 to 81 (DDYDEPTDSLDARGHRPVDRRKEEPPSLRPAPPPISGGGYRARPAKATANQKKVERRPPD) is disordered. Positions 31–47 (LDARGHRPVDRRKEEPP) are enriched in basic and acidic residues. Residues 35–37 (GHR) are beta-chain polymerization, binding distal domain of another fibrin. Residues 149 to 213 (QAQVKENENV…SDISAQMEYC (65 aa)) adopt a coiled-coil conformation. 2 cysteine pairs are disulfide-bonded: C221/C306 and C231/C260. In terms of domain architecture, Fibrinogen C-terminal spans 222-478 (NIPVVSGKEC…RMSMKIRPFF (257 aa)). The N-linked (GlcNAc...) asparagine glycan is linked to N384. A disulfide bridge links C414 with C427.

Heterohexamer; disulfide linked. Contains 2 sets of 3 non-identical chains (alpha, beta and gamma). The 2 heterotrimers are in head to head conformation with the N-termini in a small central domain. In terms of processing, conversion of fibrinogen to fibrin is triggered by thrombin, which cleaves fibrinopeptides A and B from alpha and beta chains, and thus exposes the N-terminal polymerization sites responsible for the formation of the soft clot.

The protein resides in the secreted. Cleaved by the protease thrombin to yield monomers which, together with fibrinogen alpha (FGA) and fibrinogen gamma (FGG), polymerize to form an insoluble fibrin matrix. Fibrin has a major function in hemostasis as one of the primary components of blood clots. In addition, functions during the early stages of wound repair to stabilize the lesion and guide cell migration during re-epithelialization. Was originally thought to be essential for platelet aggregation, based on in vitro studies using anticoagulated blood. However, subsequent studies have shown that it is not absolutely required for thrombus formation in vivo. Enhances expression of SELP in activated platelets via an ITGB3-dependent pathway. Maternal fibrinogen is essential for successful pregnancy. Fibrin deposition is also associated with infection, where it protects against IFNG-mediated hemorrhage. May also facilitate the immune response via both innate and T-cell mediated pathways. In Mus musculus (Mouse), this protein is Fibrinogen beta chain (Fgb).